The primary structure comprises 957 residues: Collagen alpha-1(XXI) chain (957 aa).

Residues 1 to 22 form the signal peptide; sequence MAHYITFLCMVLVLLLQNSVLA. One can recognise a VWFA domain in the interval 37–211; the sequence is DLVFILDGSY…KIREVMKQKL (175 aa). An N-linked (GlcNAc...) asparagine glycan is attached at asparagine 62. The Laminin G-like domain maps to 230–412; the sequence is GFDILLGLDV…VQKLRIYCDP (183 aa). 3 consecutive Collagen-like domains span residues 448–500, 501–542, and 543–594; these read PGKP…GARG, LPGY…GDKG, and SPGF…SPGA. Disordered stretches follow at residues 448-786 and 825-938; these read PGKP…KPGR and GSPG…ICDP. Low complexity-rich tracts occupy residues 451–462 and 471–481; these read PGLQGPKGDPGL and QPGQDGKPGYQ. Basic and acidic residues predominate over residues 507 to 517; it reads EPGRDGDKGDR. 2 stretches are compositionally biased toward low complexity: residues 618-637 and 705-729; these read QKGE…PGMP and EKGI…IQGH. Collagen-like domains lie at 681 to 733, 734 to 787, 825 to 882, and 884 to 934; these read SPGE…HGAK, GERG…PGRE, GSPG…GSQG, and GYPG…GPPG. The segment covering 732–742 has biased composition (basic and acidic residues); sequence AKGERGEKGEP. Positions 829-838 are enriched in pro residues; the sequence is IPGPPGPIGP. Low complexity predominate over residues 839-874; that stretch reads EGPRGLPGLPGRDGVPGLVGVPGRPGVRGLKGLPGR. A compositionally biased stretch (pro residues) spans 889-900; the sequence is QGPPGPPGPEGP.

Belongs to the fibril-associated collagens with interrupted helices (FACIT) family. Highly expressed in lymph node, jejunum, pancreas, stomach, trachea, testis, uterus and placenta; moderately expressed in brain, colon, lung, prostate, spinal cord, salivary gland and vascular smooth-muscle cells and very weakly expressed in heart, liver, kidney, bone marrow, spleen, thymus, skeletal muscle, adrenal gland and peripheral leukocytes. Expression in heart was higher in the right ventricle and atrium than in the left ventricle and atrium.

It localises to the secreted. It is found in the extracellular space. Its subcellular location is the extracellular matrix. The protein localises to the cytoplasm. The polypeptide is Collagen alpha-1(XXI) chain (COL21A1) (Homo sapiens (Human)).